Here is a 976-residue protein sequence, read N- to C-terminus: Receptor-like protein 14 (976 aa).

The signal sequence occupies residues M1–C26. At C27–M928 the chain is on the extracellular side. Residues N60, N75, N98, N112, N151, N185, and N200 are each glycosylated (N-linked (GlcNAc...) asparagine). 17 LRR repeats span residues F105 to D127, L137 to A160, T162 to N185, L186 to L209, E210 to V233, L234 to E258, K260 to L283, N284 to S306, E308 to N331, T333 to K358, F359 to Q381, T382 to N405, P407 to V428, H429 to V452, P454 to M477, N478 to G501, and F503 to S528. The N-linked (GlcNAc...) asparagine glycan is linked to N331. The N-linked (GlcNAc...) asparagine glycan is linked to N416. Residues N460 and N489 are each glycosylated (N-linked (GlcNAc...) asparagine). Residues I530 to T549 form an LRR 18; degenerate repeat. LRR repeat units lie at residues L550 to P573, S575 to I599, H600 to S623, Y625 to L645, E646 to G669, M671 to L692, T693 to H715, L782 to D805, L806 to K829, K831 to L854, and S856 to T879. N-linked (GlcNAc...) asparagine glycosylation is present at N552. The N-linked (GlcNAc...) asparagine glycan is linked to N633. N680 carries N-linked (GlcNAc...) asparagine glycosylation. N813, N826, N853, N861, and N866 each carry an N-linked (GlcNAc...) asparagine glycan. Residues D897–D922 are disordered. Residues R898–D910 are compositionally biased toward basic and acidic residues. Residues N911 to D922 are compositionally biased toward acidic residues. The helical transmembrane segment at V929–L949 threads the bilayer. The Cytoplasmic segment spans residues M950–S976.

The protein belongs to the RLP family.

It localises to the cell membrane. The chain is Receptor-like protein 14 from Arabidopsis thaliana (Mouse-ear cress).